We begin with the raw amino-acid sequence, 654 residues long: Endoplasmic reticulum chaperone BiP (654 aa).

The signal sequence occupies residues 1 to 18; that stretch reads MKLSLVAAMLLLLSAARA. The segment at 1–80 is required for interaction with ELAPOR1; that stretch reads MKLSLVAAML…EGERLIGDAA (80 aa). 36–39 lines the ATP pocket; it reads GTTY. Ser86 is subject to Phosphoserine. Lys96 serves as a coordination point for ATP. Lys125 carries the post-translational modification N6-acetyllysine. The segment at 125–280 is nucleotide-binding (NBD); the sequence is KPYIQVDIGG…KKKTGKDVRK (156 aa). 3'-nitrotyrosine is present on Tyr160. Lys213 carries the post-translational modification N6-acetyllysine. Residue 227 to 229 participates in ATP binding; the sequence is GGT. N6-acetyllysine is present on Lys271. Residue 293–300 participates in ATP binding; sequence EKAKRALS. Lys326 is subject to N6-acetyllysine. Lys352 participates in a covalent cross-link: Glycyl lysine isopeptide (Lys-Gly) (interchain with G-Cter in SUMO2). N6-acetyllysine; alternate is present on Lys353. A Glycyl lysine isopeptide (Lys-Gly) (interchain with G-Cter in SUMO1); alternate cross-link involves residue Lys353. Position 364 to 367 (364 to 367) interacts with ATP; that stretch reads GSTR. The interdomain linker stretch occupies residues 409 to 419; it reads QDTGDLALLDV. Positions 420–500 are substrate-binding (SBD); the sequence is CPLTLGIETV…PRGVPQIEVT (81 aa). Lys447 carries the N6-succinyllysine modification. Arg492 is modified (omega-N-methylarginine). Thr518 carries the post-translational modification O-AMP-threonine; alternate. A Phosphothreonine; alternate modification is found at Thr518. An N6,N6,N6-trimethyllysine; by METTL21A; in vitro modification is found at Lys585. Lys585 bears the N6,N6-dimethyllysine; alternate mark. Lys585 carries the post-translational modification N6-methyllysine; alternate. At Lys591 the chain carries N6-methyllysine. The segment at 633–654 is disordered; that stretch reads KLYGSAGPPPTGEEDTAEKDEL. Thr643 and Thr648 each carry phosphothreonine. Residues 644 to 654 are compositionally biased toward acidic residues; sequence GEEDTAEKDEL. The Prevents secretion from ER motif lies at 651–654; it reads KDEL.

Belongs to the heat shock protein 70 family. Monomer and homooligomer; homooligomerization via the interdomain linker inactivates the chaperone activity and acts as a storage of HSPA5/BiP molecules. Interacts with DNAJC1 (via J domain). Component of an EIF2 complex at least composed of CELF1/CUGBP1, CALR, CALR3, EIF2S1, EIF2S2, HSP90B1 and HSPA5. Part of a large chaperone multiprotein complex comprising DNAJB11, HSP90B1, HSPA5, HYOU, PDIA2, PDIA4, PDIA6, PPIB, SDF2L1, UGGT1 and very small amounts of ERP29, but not, or at very low levels, CALR nor CANX. Interacts with TMEM132A and TRIM21. May form a complex with ERLEC1, OS9, SEL1L and SYVN1. Interacts with DNAJC10. Interacts with DNAJB9/ERdj4; leading to recruit HSPA5/BiP to ERN1/IRE1. Interacts with ERN1/IRE1 (via luminal domain); the interaction takes place following interaction with DNAJB9/ERdj4 and leads to inactivate ERN1/IRE1, the interaction also competitively inhibits ERN1 interaction with MANF. Interacts directly with MANF (via SAP domain); the interaction inhibits ATP binding to HSPA5/BiP and subsequent nucleotide exchange. Interacts with EIF2AK3/PERK (via luminal domain); interaction leads to inactivate EIF2AK3/PERK. Interacts with MX1. Interacts with METTL23. Interacts with CEMIP; the interaction induces calcium leakage from the endoplasmic reticulum and cell migration. Interacts with PCSK4 form; the interaction takes place in the endoplasmic reticulum. Interacts with CIPC. Interacts with CCDC88B (via C-terminus); the interaction opposes ERN1-mediated JNK activation, protecting against apoptosis. Interacts with INPP5K; necessary for INPP5K localization at the endoplasmic reticulum. Interacts with MANF; the interaction is direct. Interacts with LOXL2; leading to activate the ERN1/IRE1-XBP1 pathway of the unfolded protein response. Interacts with CLU under stressed condition; interaction increases CLU protein stability; facilitates its retrotranslocation and redistribution to the mitochondria; cooperatively suppress stress-induced apoptosis by stabilizing mitochondrial membrane integrity. Interacts with CCDC47. Interacts with CLN3. Interacts with ELAPOR1; may regulate the function of HSPA5 in apoptosis and cell proliferation. Interacts with CASP7. Interacts with ILDR2; the interaction stabilizes ILDR2 expression. Interacts with ADAM7. In terms of processing, in unstressed cells, AMPylation at Thr-518 by FICD inactivates the chaperome activity: AMPylated form is locked in a relatively inert state and only weakly stimulated by J domain-containing proteins. In response to endoplasmic reticulum stress, de-AMPylation by the same protein, FICD, restores the chaperone activity.

The protein resides in the endoplasmic reticulum lumen. The protein localises to the melanosome. It is found in the cytoplasm. Its subcellular location is the cell surface. It catalyses the reaction ATP + H2O = ADP + phosphate + H(+). With respect to regulation, the chaperone activity is regulated by ATP-induced allosteric coupling of the nucleotide-binding (NBD) and substrate-binding (SBD) domains. In the ADP-bound and nucleotide-free (apo) states, the two domains have little interaction. In contrast, in the ATP-bound state the two domains are tightly coupled, which results in drastically accelerated kinetics in both binding and release of polypeptide substrates. J domain-containing co-chaperones (DNAJB9/ERdj4 or DNAJC10/ERdj5) stimulate the ATPase activity and are required for efficient substrate recognition by HSPA5/BiP. Homooligomerization inactivates participating HSPA5/BiP protomers and probably act as reservoirs to store HSPA5/BiP molecules when they are not needed by the cell. Endoplasmic reticulum chaperone that plays a key role in protein folding and quality control in the endoplasmic reticulum lumen. Involved in the correct folding of proteins and degradation of misfolded proteins via its interaction with DNAJC10/ERdj5, probably to facilitate the release of DNAJC10/ERdj5 from its substrate. Acts as a key repressor of the EIF2AK3/PERK and ERN1/IRE1-mediated unfolded protein response (UPR). In the unstressed endoplasmic reticulum, recruited by DNAJB9/ERdj4 to the luminal region of ERN1/IRE1, leading to disrupt the dimerization of ERN1/IRE1, thereby inactivating ERN1/IRE1. Also binds and inactivates EIF2AK3/PERK in unstressed cells. Accumulation of misfolded protein in the endoplasmic reticulum causes release of HSPA5/BiP from ERN1/IRE1 and EIF2AK3/PERK, allowing their homodimerization and subsequent activation. Plays an auxiliary role in post-translational transport of small presecretory proteins across endoplasmic reticulum (ER). May function as an allosteric modulator for SEC61 channel-forming translocon complex, likely cooperating with SEC62 to enable the productive insertion of these precursors into SEC61 channel. Appears to specifically regulate translocation of precursors having inhibitory residues in their mature region that weaken channel gating. May also play a role in apoptosis and cell proliferation. The polypeptide is Endoplasmic reticulum chaperone BiP (Pongo abelii (Sumatran orangutan)).